The chain runs to 196 residues: Glycerol-3-phosphate acyltransferase (196 aa).

The next 4 helical transmembrane spans lie at 4 to 24 (LTLL…AVVI), 80 to 100 (PFFL…PLYF), 114 to 134 (AMFP…LLVF), and 155 to 175 (AYWI…LILW).

Belongs to the PlsY family. Probably interacts with PlsX.

It localises to the cell inner membrane. It catalyses the reaction an acyl phosphate + sn-glycerol 3-phosphate = a 1-acyl-sn-glycero-3-phosphate + phosphate. It functions in the pathway lipid metabolism; phospholipid metabolism. Catalyzes the transfer of an acyl group from acyl-phosphate (acyl-PO(4)) to glycerol-3-phosphate (G3P) to form lysophosphatidic acid (LPA). This enzyme utilizes acyl-phosphate as fatty acyl donor, but not acyl-CoA or acyl-ACP. This is Glycerol-3-phosphate acyltransferase from Idiomarina loihiensis (strain ATCC BAA-735 / DSM 15497 / L2-TR).